A 1287-amino-acid polypeptide reads, in one-letter code: Rho GTPase-activating protein 33 (1287 aa).

The disordered stretch occupies residues 1–40 (MVARSTDSLDGPGEGSVQPLPTAGGPSVKGKPGKRLSAPR). A Phosphoserine modification is found at S8. The 110-residue stretch at 59–168 (FGHIQLLLSP…CGPVLTWMEL (110 aa)) folds into the PX; atypical domain. The SH3 domain maps to 186-248 (PAVAAAHVIK…PSECVELFTE (63 aa)). The 196-residue stretch at 315–510 (CDLGEHLSNS…FLLTHVDVLF (196 aa)) folds into the Rho-GAP domain. Disordered stretches follow at residues 551 to 792 (RTQG…SPAA), 813 to 832 (AGGA…GRSL), 859 to 1030 (KLRG…VPTP), 1056 to 1075 (GPPS…SLGP), 1090 to 1134 (GASE…SPDF), and 1146 to 1287 (PPDH…RSYC). The segment covering 558–571 (TPTEPTTPKAPASP) has biased composition (low complexity). S570 is subject to Phosphoserine. A compositionally biased stretch (basic and acidic residues) spans 572-584 (AERRKGERGEKQR). Residues 622 to 645 (SGSRPDTVTLRSAKSEESLSSQAS) show a composition bias toward polar residues. S636 carries the post-translational modification Phosphoserine. Residues 672–709 (AGSCESLSSSSSSESSSSESSSSSSESSAAGLGALSGS) are compositionally biased toward low complexity. The residue at position 727 (S727) is a Phosphoserine. A compositionally biased stretch (pro residues) spans 752–766 (PGDPAPPASPAPPAP). Composition is skewed to low complexity over residues 813 to 829 (AGGA…LSPG) and 896 to 919 (PARL…SQQE). Polar residues-rich tracts occupy residues 972 to 981 (RQQSDGSLLR) and 1019 to 1028 (SPCSVPSQVP). Y1169 is modified (phosphotyrosine). The span at 1175–1189 (GPRGPSPASSSSSSP) shows a compositional bias: low complexity. Residue R1244 is modified to Omega-N-methylarginine. Residues 1274–1287 (SWSLHSEGQTRSYC) show a composition bias toward polar residues.

The protein belongs to the PX domain-containing GAP family. Specifically interacts with CDC42 and RHOQ/TC10 through its Rho-GAP domain. Interacts with NEK6.

Its function is as follows. May be involved in several stages of intracellular trafficking. Could play an important role in the regulation of glucose transport by insulin. May act as a downstream effector of RHOQ/TC10 in the regulation of insulin-stimulated glucose transport. The polypeptide is Rho GTPase-activating protein 33 (ARHGAP33) (Homo sapiens (Human)).